We begin with the raw amino-acid sequence, 145 residues long: Bacilliredoxin ABC2045 (145 aa).

This sequence belongs to the bacilliredoxin family.

The sequence is that of Bacilliredoxin ABC2045 from Shouchella clausii (strain KSM-K16) (Alkalihalobacillus clausii).